Consider the following 74-residue polypeptide: MLFFKEKFYNELSYYRGGHKDLESMFELALEYIEKLEEEDEQQVTDYENAMEEELRDAVDVIESQLEIIKDIVR.

The stretch at 19 to 73 (HKDLESMFELALEYIEKLEEEDEQQVTDYENAMEEELRDAVDVIESQLEIIKDIV) forms a coiled coil.

In terms of biological role, targets the host DNA sliding clamp and inhibits host DNA replication. The chain is Gene product 168 from Twortvirus twort (Bacteriophage Twort).